Here is a 243-residue protein sequence, read N- to C-terminus: Undecaprenyl-phosphate mannosyltransferase (243 aa).

Belongs to the glycosyltransferase 2 family.

It carries out the reaction di-trans,octa-cis-undecaprenyl phosphate + GDP-alpha-D-mannose = D-mannosyl di-trans,octa-cis-undecaprenyl phosphate + GDP. In terms of biological role, catalyzes the transfer of mannose from GDP-mannose to D-mannosyl-1-phosphoundecaprenol. The polypeptide is Undecaprenyl-phosphate mannosyltransferase (Micrococcus luteus (strain ATCC 4698 / DSM 20030 / JCM 1464 / CCM 169 / CCUG 5858 / IAM 1056 / NBRC 3333 / NCIMB 9278 / NCTC 2665 / VKM Ac-2230) (Micrococcus lysodeikticus)).